Reading from the N-terminus, the 390-residue chain is Glutamate 5-kinase (390 aa).

Lysine 29 is a binding site for ATP. The substrate site is built by serine 69, aspartate 156, and asparagine 168. 188 to 189 (TD) is an ATP binding site. A PUA domain is found at 295–374 (SGSLIVDAGA…EQFDRILGNN (80 aa)).

The protein belongs to the glutamate 5-kinase family.

It is found in the cytoplasm. It carries out the reaction L-glutamate + ATP = L-glutamyl 5-phosphate + ADP. It participates in amino-acid biosynthesis; L-proline biosynthesis; L-glutamate 5-semialdehyde from L-glutamate: step 1/2. Functionally, catalyzes the transfer of a phosphate group to glutamate to form L-glutamate 5-phosphate. In Psychrobacter arcticus (strain DSM 17307 / VKM B-2377 / 273-4), this protein is Glutamate 5-kinase.